The chain runs to 430 residues: Glutamate-1-semialdehyde 2,1-aminomutase (430 aa).

An N6-(pyridoxal phosphate)lysine modification is found at Lys267.

The protein belongs to the class-III pyridoxal-phosphate-dependent aminotransferase family. HemL subfamily. In terms of assembly, homodimer. It depends on pyridoxal 5'-phosphate as a cofactor.

It localises to the cytoplasm. It catalyses the reaction (S)-4-amino-5-oxopentanoate = 5-aminolevulinate. The protein operates within porphyrin-containing compound metabolism; protoporphyrin-IX biosynthesis; 5-aminolevulinate from L-glutamyl-tRNA(Glu): step 2/2. The protein is Glutamate-1-semialdehyde 2,1-aminomutase of Natranaerobius thermophilus (strain ATCC BAA-1301 / DSM 18059 / JW/NM-WN-LF).